Reading from the N-terminus, the 1190-residue chain is Pyruvate-flavodoxin oxidoreductase (1190 aa).

4Fe-4S ferredoxin-type domains lie at 687–716 and 743–773; these read EIPV…SKVY and FTIQ…PRKK. [4Fe-4S] cluster-binding residues include cysteine 696, cysteine 699, cysteine 702, cysteine 706, cysteine 752, cysteine 755, cysteine 758, cysteine 762, cysteine 826, cysteine 829, cysteine 854, and cysteine 1089.

This sequence belongs to the pyruvate:ferredoxin/flavodoxin oxidoreductase family. The cofactor is [4Fe-4S] cluster.

The enzyme catalyses oxidized [flavodoxin] + pyruvate + CoA + 2 H(+) = reduced [flavodoxin] + acetyl-CoA + CO2. Oxidoreductase required for the transfer of electrons from pyruvate to flavodoxin, which reduces nitrogenase. This Trichormus variabilis (strain ATCC 29413 / PCC 7937) (Anabaena variabilis) protein is Pyruvate-flavodoxin oxidoreductase (nifJ).